The following is a 336-amino-acid chain: Biotin synthase (336 aa).

The region spanning 36–263 (TKVQISTLLS…ESHVRLAAGR (228 aa)) is the Radical SAM core domain. Cys51, Cys55, and Cys58 together coordinate [4Fe-4S] cluster. [2Fe-2S] cluster-binding residues include Cys95, Cys126, Cys186, and Arg258.

This sequence belongs to the radical SAM superfamily. Biotin synthase family. Homodimer. It depends on [4Fe-4S] cluster as a cofactor. [2Fe-2S] cluster serves as cofactor.

It catalyses the reaction (4R,5S)-dethiobiotin + (sulfur carrier)-SH + 2 reduced [2Fe-2S]-[ferredoxin] + 2 S-adenosyl-L-methionine = (sulfur carrier)-H + biotin + 2 5'-deoxyadenosine + 2 L-methionine + 2 oxidized [2Fe-2S]-[ferredoxin]. Its pathway is cofactor biosynthesis; biotin biosynthesis; biotin from 7,8-diaminononanoate: step 2/2. Its function is as follows. Catalyzes the conversion of dethiobiotin (DTB) to biotin by the insertion of a sulfur atom into dethiobiotin via a radical-based mechanism. The polypeptide is Biotin synthase (Gluconobacter oxydans (strain 621H) (Gluconobacter suboxydans)).